The sequence spans 262 residues: Merozoite surface protein 2 (262 aa).

A signal peptide spans M1–I20. N22 and N36 each carry an N-linked (GlcNAc...) asparagine glycan. Positions A44 to S188 are polymorphic region. Residues A44 to N223 are disordered. Over residues G51–A66 the composition is skewed to gly residues. Residues G67–N111 are compositionally biased toward low complexity. Positions P112–V127 are enriched in basic and acidic residues. 2 stretches are compositionally biased toward polar residues: residues K129–P155 and K162–P190. N139 is a glycosylation site (N-linked (GlcNAc...) asparagine). N211 is a glycosylation site (N-linked (GlcNAc...) asparagine). The cysteines at positions 219 and 227 are disulfide-linked. N-linked (GlcNAc...) asparagine glycosylation is found at N235 and N236. A lipid anchor (GPI-anchor amidated asparagine) is attached at N236. The propeptide at S237–I262 is removed in mature form.

Its subcellular location is the cell membrane. May play a role in the merozoite attachment to the erythrocyte. This is Merozoite surface protein 2 from Plasmodium falciparum (isolate Camp / Malaysia).